A 193-amino-acid polypeptide reads, in one-letter code: MNIEISNVAKLPSRFGMFKVQAFKEDEKEHLVIIKEPYKEPVNIRIHSECLTGDAIGSLKCDCRDQLEESLKFIEKNGGMVIYLRQEGRNIGLFNKINAYNLQDKGLDTIEANHQLGFKTDERTYEIVDFILKYYKIKSINLLTNNPKKLMGLHNVKVAARVPIIIKPNKFNEKYLQTKKNEMGHLLDDNKKA.

Residue 45-49 (RIHSE) coordinates GTP. Residues Cys50, Cys61, and Cys63 each contribute to the Zn(2+) site. Residues Gln66, 87 to 89 (EGR), and Thr109 each bind GTP. The active-site Proton acceptor is Asp121. Residue Arg123 is the Nucleophile of the active site. Positions 144 and 149 each coordinate GTP.

Belongs to the GTP cyclohydrolase II family. Zn(2+) serves as cofactor.

It carries out the reaction GTP + 4 H2O = 2,5-diamino-6-hydroxy-4-(5-phosphoribosylamino)-pyrimidine + formate + 2 phosphate + 3 H(+). Its pathway is cofactor biosynthesis; riboflavin biosynthesis; 5-amino-6-(D-ribitylamino)uracil from GTP: step 1/4. Catalyzes the conversion of GTP to 2,5-diamino-6-ribosylamino-4(3H)-pyrimidinone 5'-phosphate (DARP), formate and pyrophosphate. The chain is GTP cyclohydrolase-2 from Campylobacter hominis (strain ATCC BAA-381 / DSM 21671 / CCUG 45161 / LMG 19568 / NCTC 13146 / CH001A).